Reading from the N-terminus, the 314-residue chain is Aspartate carbamoyltransferase catalytic subunit (314 aa).

Carbamoyl phosphate-binding residues include Arg55 and Thr56. Lys83 contributes to the L-aspartate binding site. Positions 105, 139, and 142 each coordinate carbamoyl phosphate. L-aspartate is bound by residues Arg172 and Arg226. 2 residues coordinate carbamoyl phosphate: Gly267 and Pro268.

The protein belongs to the aspartate/ornithine carbamoyltransferase superfamily. ATCase family. As to quaternary structure, heterododecamer (2C3:3R2) of six catalytic PyrB chains organized as two trimers (C3), and six regulatory PyrI chains organized as three dimers (R2).

It catalyses the reaction carbamoyl phosphate + L-aspartate = N-carbamoyl-L-aspartate + phosphate + H(+). The protein operates within pyrimidine metabolism; UMP biosynthesis via de novo pathway; (S)-dihydroorotate from bicarbonate: step 2/3. Catalyzes the condensation of carbamoyl phosphate and aspartate to form carbamoyl aspartate and inorganic phosphate, the committed step in the de novo pyrimidine nucleotide biosynthesis pathway. This chain is Aspartate carbamoyltransferase catalytic subunit, found in Rhodococcus opacus (strain B4).